The following is a 357-amino-acid chain: Alanine racemase (357 aa).

The active-site Proton acceptor; specific for D-alanine is the lysine 33. Lysine 33 is subject to N6-(pyridoxal phosphate)lysine. Arginine 129 provides a ligand contact to substrate. Residue tyrosine 253 is the Proton acceptor; specific for L-alanine of the active site. Methionine 301 is a substrate binding site.

Belongs to the alanine racemase family. It depends on pyridoxal 5'-phosphate as a cofactor.

It catalyses the reaction L-alanine = D-alanine. The protein operates within amino-acid biosynthesis; D-alanine biosynthesis; D-alanine from L-alanine: step 1/1. In terms of biological role, catalyzes the interconversion of L-alanine and D-alanine. May also act on other amino acids. The protein is Alanine racemase (alr) of Pseudomonas fluorescens (strain ATCC BAA-477 / NRRL B-23932 / Pf-5).